Reading from the N-terminus, the 67-residue chain is UPF0434 protein Bphy_0537 (67 aa).

It belongs to the UPF0434 family.

This is UPF0434 protein Bphy_0537 from Paraburkholderia phymatum (strain DSM 17167 / CIP 108236 / LMG 21445 / STM815) (Burkholderia phymatum).